The sequence spans 121 residues: DNA-directed RNA polymerase subunit Rpo8 (121 aa).

It belongs to the archaeal Rpo8 RNA polymerase subunit family. As to quaternary structure, part of the 13-subunit RNA polymerase complex. Post-translationally, this subunit is phosphorylated.

Its subcellular location is the cytoplasm. The catalysed reaction is RNA(n) + a ribonucleoside 5'-triphosphate = RNA(n+1) + diphosphate. In terms of biological role, DNA-dependent RNA polymerase (RNAP) catalyzes the transcription of DNA into RNA using the four ribonucleoside triphosphates as substrates. The polypeptide is DNA-directed RNA polymerase subunit Rpo8 (Sulfolobus acidocaldarius (strain ATCC 33909 / DSM 639 / JCM 8929 / NBRC 15157 / NCIMB 11770)).